The following is a 224-amino-acid chain: tRNA (guanine-N(7)-)-methyltransferase (224 aa).

S-adenosyl-L-methionine is bound by residues E54, E79, E106, and D129. D129 is an active-site residue. Residues K133 and D165 each coordinate substrate.

Belongs to the class I-like SAM-binding methyltransferase superfamily. TrmB family.

It carries out the reaction guanosine(46) in tRNA + S-adenosyl-L-methionine = N(7)-methylguanosine(46) in tRNA + S-adenosyl-L-homocysteine. It functions in the pathway tRNA modification; N(7)-methylguanine-tRNA biosynthesis. Its function is as follows. Catalyzes the formation of N(7)-methylguanine at position 46 (m7G46) in tRNA. This chain is tRNA (guanine-N(7)-)-methyltransferase, found in Chlamydia trachomatis serovar D (strain ATCC VR-885 / DSM 19411 / UW-3/Cx).